Here is a 159-residue protein sequence, read N- to C-terminus: Ribosomal RNA large subunit methyltransferase H (159 aa).

S-adenosyl-L-methionine-binding positions include Leu76, Gly108, and 127–132 (LSKMTY).

It belongs to the RNA methyltransferase RlmH family. In terms of assembly, homodimer.

It localises to the cytoplasm. The catalysed reaction is pseudouridine(1915) in 23S rRNA + S-adenosyl-L-methionine = N(3)-methylpseudouridine(1915) in 23S rRNA + S-adenosyl-L-homocysteine + H(+). Its function is as follows. Specifically methylates the pseudouridine at position 1915 (m3Psi1915) in 23S rRNA. In Ruminiclostridium cellulolyticum (strain ATCC 35319 / DSM 5812 / JCM 6584 / H10) (Clostridium cellulolyticum), this protein is Ribosomal RNA large subunit methyltransferase H.